The chain runs to 891 residues: Alanine--tRNA ligase (891 aa).

4 residues coordinate Zn(2+): H574, H578, C676, and H680.

The protein belongs to the class-II aminoacyl-tRNA synthetase family. It depends on Zn(2+) as a cofactor.

It localises to the cytoplasm. It catalyses the reaction tRNA(Ala) + L-alanine + ATP = L-alanyl-tRNA(Ala) + AMP + diphosphate. Functionally, catalyzes the attachment of alanine to tRNA(Ala) in a two-step reaction: alanine is first activated by ATP to form Ala-AMP and then transferred to the acceptor end of tRNA(Ala). Also edits incorrectly charged Ser-tRNA(Ala) and Gly-tRNA(Ala) via its editing domain. This is Alanine--tRNA ligase from Synechococcus sp. (strain WH7803).